The sequence spans 102 residues: NADH-quinone oxidoreductase subunit K 1 (102 aa).

3 helical membrane passes run 5-25 (LSHYLTVSAILFTLGVFGIFL), 31-51 (IVILMSVELILLSVNINMVAF), and 65-85 (LFILTVAAAEAAIGLAILVVF).

It belongs to the complex I subunit 4L family. As to quaternary structure, NDH-1 is composed of 14 different subunits. Subunits NuoA, H, J, K, L, M, N constitute the membrane sector of the complex.

It localises to the cell inner membrane. It carries out the reaction a quinone + NADH + 5 H(+)(in) = a quinol + NAD(+) + 4 H(+)(out). NDH-1 shuttles electrons from NADH, via FMN and iron-sulfur (Fe-S) centers, to quinones in the respiratory chain. The immediate electron acceptor for the enzyme in this species is believed to be ubiquinone. Couples the redox reaction to proton translocation (for every two electrons transferred, four hydrogen ions are translocated across the cytoplasmic membrane), and thus conserves the redox energy in a proton gradient. This is NADH-quinone oxidoreductase subunit K 1 from Rhizobium etli (strain CIAT 652).